Here is a 415-residue protein sequence, read N- to C-terminus: MKIIDALFAPGLTGFYFDDQEAIKKGAVHNGFWYEGNPQTPGYKRIRQKGEAILVMLVLENGEVAYGDCAAVQYSGTGGRDPLFTAEEFLPILENEIRPKLIGLELNSFRNLAHIFDRELTVNGKPLHTALRYGLTQALLDGVARAQKKLMAEVIAEEYQLPVIPEPVPIFVQTGDDLYTNADKAIIKRADVLPHALINNVEEKLGRQGEKLLAYIKWLKKRIFELAGDEYRPVIHIDVYGTVGLIFANDLEKIAGYLATLAHEAAPFKLRIEGPVDMGSLWGQIEALSKLREIIDRRGIPVEIVADEWCNTLEDIKLFADHKAGHMVQIKTPDLGGINNVVEAVLYAKMKGIGAYLGGTCNETDRSAQISVHLALATRPDQMLAKPGMGLDEGLMIVYNEMQRAIALLKRRGGK.

Position 173 (glutamine 173) interacts with (2S,3S)-3-methyl-L-aspartate. Mg(2+) is bound by residues aspartate 238, glutamate 273, and aspartate 307. Glutamine 329 contacts (2S,3S)-3-methyl-L-aspartate. Lysine 331 functions as the Proton acceptor in the catalytic mechanism. 360 to 361 (TC) provides a ligand contact to (2S,3S)-3-methyl-L-aspartate.

It belongs to the methylaspartate ammonia-lyase family. In terms of assembly, homodimer. Mg(2+) is required as a cofactor.

It catalyses the reaction (2S,3S)-3-methyl-L-aspartate = mesaconate + NH4(+). The protein operates within amino-acid degradation; L-glutamate degradation via mesaconate pathway; acetate and pyruvate from L-glutamate: step 2/4. Involved in the methylaspartate cycle. Catalyzes the formation of the alpha,beta-unsaturated bond by the reversible anti elimination of ammonia from L-threo-beta-methylaspartate (L-threo-(2S,3S)-3-methylaspartate) to give mesaconate. The chain is Methylaspartate ammonia-lyase 2 from Carboxydothermus hydrogenoformans (strain ATCC BAA-161 / DSM 6008 / Z-2901).